A 1217-amino-acid polypeptide reads, in one-letter code: ATP-dependent helicase/nuclease subunit A (1217 aa).

Residues 10-475 form the UvrD-like helicase ATP-binding domain; the sequence is VIWTDAQWQS…IDLSQNFRSR (466 aa). 31-38 serves as a coordination point for ATP; sequence AAAGSGKT. In terms of domain architecture, UvrD-like helicase C-terminal spans 476-786; the sequence is KEVLSTTNYI…RMMTIHSSKG (311 aa).

It belongs to the helicase family. AddA subfamily. In terms of assembly, heterodimer of AddA and AddB/RexB. Requires Mg(2+) as cofactor.

The enzyme catalyses Couples ATP hydrolysis with the unwinding of duplex DNA by translocating in the 3'-5' direction.. It carries out the reaction ATP + H2O = ADP + phosphate + H(+). In terms of biological role, the heterodimer acts as both an ATP-dependent DNA helicase and an ATP-dependent, dual-direction single-stranded exonuclease. Recognizes the chi site generating a DNA molecule suitable for the initiation of homologous recombination. The AddA nuclease domain is required for chi fragment generation; this subunit has the helicase and 3' -&gt; 5' nuclease activities. The chain is ATP-dependent helicase/nuclease subunit A from Staphylococcus aureus (strain NCTC 8325 / PS 47).